Consider the following 177-residue polypeptide: Shikimate kinase (177 aa).

17 to 22 provides a ligand contact to ATP; that stretch reads GVGKTT. Threonine 21 is a binding site for Mg(2+). Substrate contacts are provided by aspartate 39, arginine 63, and glycine 86. Arginine 125 lines the ATP pocket. A substrate-binding site is contributed by arginine 143. Arginine 159 contacts ATP.

Belongs to the shikimate kinase family. As to quaternary structure, monomer. Mg(2+) serves as cofactor.

Its subcellular location is the cytoplasm. It catalyses the reaction shikimate + ATP = 3-phosphoshikimate + ADP + H(+). The protein operates within metabolic intermediate biosynthesis; chorismate biosynthesis; chorismate from D-erythrose 4-phosphate and phosphoenolpyruvate: step 5/7. Functionally, catalyzes the specific phosphorylation of the 3-hydroxyl group of shikimic acid using ATP as a cosubstrate. The chain is Shikimate kinase from Bacillus licheniformis (strain ATCC 14580 / DSM 13 / JCM 2505 / CCUG 7422 / NBRC 12200 / NCIMB 9375 / NCTC 10341 / NRRL NRS-1264 / Gibson 46).